The following is a 643-amino-acid chain: 1-deoxy-D-xylulose-5-phosphate synthase (643 aa).

Thiamine diphosphate-binding positions include H78 and 119-121; that span reads AHS. Mg(2+) is bound at residue D150. Thiamine diphosphate is bound by residues 151-152, N179, Y288, and E370; that span reads GS. N179 is a binding site for Mg(2+).

Belongs to the transketolase family. DXPS subfamily. Homodimer. Requires Mg(2+) as cofactor. The cofactor is thiamine diphosphate.

The catalysed reaction is D-glyceraldehyde 3-phosphate + pyruvate + H(+) = 1-deoxy-D-xylulose 5-phosphate + CO2. The protein operates within metabolic intermediate biosynthesis; 1-deoxy-D-xylulose 5-phosphate biosynthesis; 1-deoxy-D-xylulose 5-phosphate from D-glyceraldehyde 3-phosphate and pyruvate: step 1/1. Functionally, catalyzes the acyloin condensation reaction between C atoms 2 and 3 of pyruvate and glyceraldehyde 3-phosphate to yield 1-deoxy-D-xylulose-5-phosphate (DXP). In Brucella suis (strain ATCC 23445 / NCTC 10510), this protein is 1-deoxy-D-xylulose-5-phosphate synthase.